We begin with the raw amino-acid sequence, 124 residues long: Alpha-amylase inhibitor 0.53 (124 aa).

4 disulfides stabilise this stretch: Cys20–Cys41, Cys28–Cys83, Cys42–Cys99, and Cys54–Cys115.

Belongs to the protease inhibitor I6 (cereal trypsin/alpha-amylase inhibitor) family. Homodimer. The disulfide bonds are essential for the inhibitor activity. Endosperm.

The protein localises to the secreted. Its function is as follows. Alpha-amylase inhibitor. This chain is Alpha-amylase inhibitor 0.53, found in Triticum aestivum (Wheat).